Consider the following 663-residue polypeptide: Protein THEMIS2 (663 aa).

2 CABIT regions span residues 2–237 (EPVP…TASS) and 238–515 (QHIH…EAEG). The disordered stretch occupies residues 545 to 663 (ASESQAPPPR…DMDDHDYEEI (119 aa)). Positions 559–577 (QGINKKQQNIQSCKESSVK) are enriched in polar residues. At threonine 596 the chain carries Phosphothreonine. The span at 621 to 641 (NPQTQNSVLSMKPKTSSSLGK) shows a compositional bias: polar residues. The span at 653-663 (PDMDDHDYEEI) shows a compositional bias: acidic residues. Tyrosine 660 is modified (phosphotyrosine).

The protein belongs to the themis family. Interacts with VAV1. Interacts with LAT. Interacts constitutively with GRB2, LYN and PLCG2; these interactions increase the activation of PLCG2 and its downstream pathways following B cell receptor stimulation. In terms of processing, phosphorylation at Tyr-660 is induced by LPS. Phosphorylated by Src kinases (Lck or Fyn) following BCR engagement. In terms of tissue distribution, expressed in both developing and mature B-cells with high expression in immature, follicular and B1 B cells. Also expressed in macrophages and dendritic cells. Down-regulated in splenocytes of mice developing arthritis in a collagen-induced model, not in those of mice failing to develop the disease. Transiently down-regulated in splenocytes of mice infected with influenza virus.

The protein localises to the nucleus. The protein resides in the cytoplasm. Its function is as follows. May constitute a control point in macrophage inflammatory response, promoting LPS-induced TLR4-mediated TNF production. Determines the threshold for activation of B cells by low-affinity and low-avidity ligands via PLCG2 activation and its downstream pathways. This Mus musculus (Mouse) protein is Protein THEMIS2.